The primary structure comprises 224 residues: Cytochrome c biogenesis ATP-binding export protein CcmA (224 aa).

The 220-residue stretch at 1–220 folds into the ABC transporter domain; it reads MQNAEAAPAL…EYAHAEVVGA (220 aa). 40 to 47 lines the ATP pocket; sequence GANGSGKT.

This sequence belongs to the ABC transporter superfamily. CcmA exporter (TC 3.A.1.107) family. In terms of assembly, the complex is composed of two ATP-binding proteins (CcmA) and two transmembrane proteins (CcmB).

The protein resides in the cell inner membrane. The enzyme catalyses heme b(in) + ATP + H2O = heme b(out) + ADP + phosphate + H(+). Part of the ABC transporter complex CcmAB involved in the biogenesis of c-type cytochromes; once thought to export heme, this seems not to be the case, but its exact role is uncertain. Responsible for energy coupling to the transport system. The protein is Cytochrome c biogenesis ATP-binding export protein CcmA of Bordetella bronchiseptica (strain ATCC BAA-588 / NCTC 13252 / RB50) (Alcaligenes bronchisepticus).